Here is a 123-residue protein sequence, read N- to C-terminus: Nitrogen fixation nifHD1 region GlnB-like protein 2 (123 aa).

This sequence belongs to the P(II) protein family.

Functionally, could be involved in the regulation of nitrogen fixation. The protein is Nitrogen fixation nifHD1 region GlnB-like protein 2 (glnBB) of Methanosarcina barkeri.